The primary structure comprises 497 residues: Cobyrinate a,c-diamide synthase (497 aa).

The GATase cobBQ-type domain maps to 273 to 478 (RIGIALDEAF…AHLHGVAYRE (206 aa)). The active-site Nucleophile is Cys355.

This sequence belongs to the CobB/CbiA family. Mg(2+) serves as cofactor.

The catalysed reaction is cob(II)yrinate + 2 L-glutamine + 2 ATP + 2 H2O = cob(II)yrinate a,c diamide + 2 L-glutamate + 2 ADP + 2 phosphate + 2 H(+). The enzyme catalyses Ni-sirohydrochlorin + 2 L-glutamine + 2 ATP + 2 H2O = Ni-sirohydrochlorin a,c-diamide + 2 L-glutamate + 2 ADP + 2 phosphate + 2 H(+). The protein operates within cofactor biosynthesis; adenosylcobalamin biosynthesis; cob(II)yrinate a,c-diamide from sirohydrochlorin (anaerobic route): step 10/10. Its function is as follows. Catalyzes the ATP-dependent amidation of the two carboxylate groups at positions a and c of cobyrinate, using either L-glutamine or ammonia as the nitrogen source (Potential). Involved in the biosynthesis of the unique nickel-containing tetrapyrrole coenzyme F430, the prosthetic group of methyl-coenzyme M reductase (MCR), which plays a key role in methanogenesis and anaerobic methane oxidation. Catalyzes the ATP-dependent amidation of the two carboxylate groups at positions a and c of Ni-sirohydrochlorin, using L-glutamine or ammonia as the nitrogen source. This Methanosarcina acetivorans (strain ATCC 35395 / DSM 2834 / JCM 12185 / C2A) protein is Cobyrinate a,c-diamide synthase.